A 169-amino-acid chain; its full sequence is uncharacterized protein (169 aa).

The Nudix hydrolase domain maps to Glu28 to Gln157. The short motif at Ala65–Gly87 is the Nudix box element. Mg(2+) contacts are provided by Glu81 and Glu85.

It belongs to the Nudix hydrolase family. The cofactor is Mg(2+).

This is an uncharacterized protein from Listeria monocytogenes serovar 1/2a (strain ATCC BAA-679 / EGD-e).